We begin with the raw amino-acid sequence, 110 residues long: Thioredoxin (110 aa).

One can recognise a Thioredoxin domain in the interval 3–108 (KPIEVHDSDF…YREIFDKVLA (106 aa)). A disulfide bridge links C32 with C35. K105 is modified (N6,N6-dimethyllysine; alternate). Position 105 is an N6-methyllysine; alternate (K105).

Functionally, participates in various redox reactions through the reversible oxidation of its active center dithiol to a disulfide and catalyzes dithiol-disulfide exchange reactions. The chain is Thioredoxin (trxA) from Chloroflexus aurantiacus (strain ATCC 29366 / DSM 635 / J-10-fl).